Reading from the N-terminus, the 357-residue chain is Malonyl CoA reductase (NADP) (357 aa).

An NADP(+)-binding site is contributed by 13-16 (TGLV). Cysteine 150 serves as the catalytic Acyl-thioester intermediate. NADP(+) is bound at residue 180 to 181 (SG). The Proton acceptor role is filled by histidine 245. 332 to 333 (NT) lines the NADP(+) pocket.

This sequence belongs to the aspartate-semialdehyde dehydrogenase family. In terms of assembly, homotetramer.

It catalyses the reaction 3-oxopropanoate + NADP(+) + CoA = malonyl-CoA + NADPH + H(+). Its function is as follows. Catalyzes the reduction of malonyl-CoA to malonate semialdehyde, a key step in the 3-hydroxypropanoate and the 3-hydroxypropanoate/4-hydroxybutyrate cycles. This Metallosphaera sedula (strain ATCC 51363 / DSM 5348 / JCM 9185 / NBRC 15509 / TH2) protein is Malonyl CoA reductase (NADP).